A 665-amino-acid chain; its full sequence is Intraflagellar transport protein 70B (665 aa).

TPR repeat units follow at residues 11 to 44 (DGEFTAVVYRLIRNARYAEAVQLLGGELQRSPRS), 45 to 78 (RAGLSLLGYCYYRLQEFALAAECYEQLGQLHPEL), 154 to 187 (TDGQINLGCLLYKEGQYEAACSKFFAALQASGYQ), 189 to 221 (DLSYNLALAYYSSRQYASALKHIAEIIERGIRQ), 393 to 424 (LTIQVQEARHNRDDEAIKKAVNEYDETMEKYI), 425 to 457 (PVLMAQAKIYWNLENYPMVEKIFRKSVEFCNDH), and 459 to 492 (VWKLNVAHVLFMQENKYKEAIGFYEPIVKKHYDN). The segment at 130-154 (PGSRSLVEQLPSREGGEESGGENET) is disordered. Residues 508 to 535 (YIMTSQNEEAEELMRKIEKEEEQLSYDD) adopt a coiled-coil conformation. One copy of the TPR 8 repeat lies at 544 to 577 (CIVNLVIGTLYCAKGNYDFGISRVIKSLEPYNKK).

The protein belongs to the TTC30/dfy-1/fleer family. Interacts with the IFT B complex components IFT27, IFT46, IFT74, IFT52, IFT57, IFT80, IFT81 and IFT88. Interacts with KIF17.

It localises to the cell projection. Its subcellular location is the cilium. Its function is as follows. Required for polyglutamylation of axonemal tubulin. Plays a role in anterograde intraflagellar transport (IFT), the process by which cilia precursors are transported from the base of the cilium to the site of their incorporation at the tip. In Homo sapiens (Human), this protein is Intraflagellar transport protein 70B.